An 857-amino-acid polypeptide reads, in one-letter code: Leucine-rich repeat extensin-like protein 5 (857 aa).

The first 31 residues, Met-1–Ser-31, serve as a signal peptide directing secretion. An LRR 1 repeat occupies Leu-32–Tyr-53. The N-linked (GlcNAc...) asparagine glycan is linked to Asn-98. 10 LRR repeats span residues Ile-125–Leu-149, Thr-150–Arg-172, Lys-174–Leu-197, Pro-198–Lys-221, Leu-223–Ser-244, Val-246–Met-267, Arg-268–Leu-291, Lys-292–Met-315, Val-316–Leu-339, and Arg-341–Leu-362. Asn-293 carries N-linked (GlcNAc...) asparagine glycosylation. A glycan (N-linked (GlcNAc...) asparagine) is linked at Asn-344. Disordered stretches follow at residues Pro-406–Pro-776 and Tyr-817–Pro-839. Composition is skewed to pro residues over residues Val-408 to Ile-571 and Pro-579 to His-768. The contains the Ser-Pro(4) repeats stretch occupies residues Ser-615–Tyr-857.

Post-translationally, hydroxylated on proline residues in the S-P-P-P-P repeat. O-glycosylated on hydroxyprolines. In terms of tissue distribution, expressed in roots, leaves and flowers.

The protein localises to the secreted. Its subcellular location is the cell wall. In terms of biological role, modulates cell morphogenesis by regulating cell wall formation and assembly, and/or growth polarization. This chain is Leucine-rich repeat extensin-like protein 5 (LRX5), found in Arabidopsis thaliana (Mouse-ear cress).